The primary structure comprises 352 residues: Putative formin-like protein 15b (352 aa).

One can recognise an FH2 domain in the interval 1 to 350 (MTLFNFIKLF…KDAKEAEMEK (350 aa)).

This sequence belongs to the formin-like family. Class-II subfamily.

In Arabidopsis thaliana (Mouse-ear cress), this protein is Putative formin-like protein 15b (FH15B).